The chain runs to 307 residues: Small ribosomal subunit biogenesis GTPase RsgA (307 aa).

Residues 85 to 242 enclose the CP-type G domain; that stretch reads RQDAWKTKLI…LIDSPGLQEF (158 aa). GTP is bound by residues 135–138 and 184–192; these read NKAD and GQSGMGKST. Positions 266, 271, 273, and 279 each coordinate Zn(2+).

The protein belongs to the TRAFAC class YlqF/YawG GTPase family. RsgA subfamily. In terms of assembly, monomer. Associates with 30S ribosomal subunit, binds 16S rRNA. It depends on Zn(2+) as a cofactor.

Its subcellular location is the cytoplasm. Functionally, one of several proteins that assist in the late maturation steps of the functional core of the 30S ribosomal subunit. Helps release RbfA from mature subunits. May play a role in the assembly of ribosomal proteins into the subunit. Circularly permuted GTPase that catalyzes slow GTP hydrolysis, GTPase activity is stimulated by the 30S ribosomal subunit. The chain is Small ribosomal subunit biogenesis GTPase RsgA from Neisseria meningitidis serogroup C (strain 053442).